Reading from the N-terminus, the 823-residue chain is Apoptosis-resistant E3 ubiquitin protein ligase 1 (823 aa).

Residues 64 to 158 (WDWKDPYEVG…VAYSPYYKIF (95 aa)) form a Filamin repeat. The segment at 315-345 (PPMHMSSSQRRPSTAIEEDDEDSPSECHTPE) is disordered. The interval 483 to 789 (SISDWSKNFE…THSTLPTAHT (307 aa)) is interaction with SOCS2. The region spanning 483–823 (SISDWSKNFE…SEGCEGFGML (341 aa)) is the HECT domain. Residue Cys790 is the Glycyl thioester intermediate of the active site.

As to quaternary structure, interacts with SOCS2. Interacts (via HECT domain) with HTRA2, DIABLO/SMAC and SEPTIN4; in the cytoplasm following induction of apoptosis. Autoubiquitinated in vitro in the presence of E2 enzyme UBE2D1/UBCH5A. In terms of tissue distribution, detected in brain, testis, heart, liver, lung and kidney with very low levels in skeletal muscle and spleen.

The catalysed reaction is S-ubiquitinyl-[E2 ubiquitin-conjugating enzyme]-L-cysteine + [acceptor protein]-L-lysine = [E2 ubiquitin-conjugating enzyme]-L-cysteine + N(6)-ubiquitinyl-[acceptor protein]-L-lysine.. It participates in protein modification; protein ubiquitination. In terms of biological role, E3 ubiquitin-protein ligase that catalyzes 'Lys-11'- or 'Lys-33'-linked polyubiquitin chains, with some preference for 'Lys-33' linkages. E3 ubiquitin-protein ligases accept ubiquitin from an E2 ubiquitin-conjugating enzyme in the form of a thioester and then directly transfers the ubiquitin to targeted substrates. Ubiquitinates SEPTIN4, DIABLO/SMAC and HTRA2 in vitro. Modulates pulmonary inflammation by targeting SOCS2 for ubiquitination and subsequent degradation by the proteasome. The chain is Apoptosis-resistant E3 ubiquitin protein ligase 1 (Arel1) from Mus musculus (Mouse).